The primary structure comprises 359 residues: 3-dehydroquinate synthase (359 aa).

NAD(+)-binding positions include 70–75 (DAEGGK), 104–108 (GAATD), 128–129 (TT), lysine 141, and lysine 150. Residues glutamate 183, histidine 246, and histidine 262 each coordinate Zn(2+).

Belongs to the sugar phosphate cyclases superfamily. Dehydroquinate synthase family. Co(2+) is required as a cofactor. It depends on Zn(2+) as a cofactor. NAD(+) serves as cofactor.

The protein localises to the cytoplasm. The catalysed reaction is 7-phospho-2-dehydro-3-deoxy-D-arabino-heptonate = 3-dehydroquinate + phosphate. It functions in the pathway metabolic intermediate biosynthesis; chorismate biosynthesis; chorismate from D-erythrose 4-phosphate and phosphoenolpyruvate: step 2/7. Functionally, catalyzes the conversion of 3-deoxy-D-arabino-heptulosonate 7-phosphate (DAHP) to dehydroquinate (DHQ). This chain is 3-dehydroquinate synthase, found in Mycolicibacterium gilvum (strain PYR-GCK) (Mycobacterium gilvum (strain PYR-GCK)).